The primary structure comprises 325 residues: Acetyl-coenzyme A carboxylase carboxyl transferase subunit alpha (325 aa).

The region spanning 44 to 298 (QLEGRAEQLR…KTAILSNLEE (255 aa)) is the CoA carboxyltransferase C-terminal domain.

It belongs to the AccA family. As to quaternary structure, acetyl-CoA carboxylase is a heterohexamer composed of biotin carboxyl carrier protein (AccB), biotin carboxylase (AccC) and two subunits each of ACCase subunit alpha (AccA) and ACCase subunit beta (AccD).

It is found in the cytoplasm. It catalyses the reaction N(6)-carboxybiotinyl-L-lysyl-[protein] + acetyl-CoA = N(6)-biotinyl-L-lysyl-[protein] + malonyl-CoA. Its pathway is lipid metabolism; malonyl-CoA biosynthesis; malonyl-CoA from acetyl-CoA: step 1/1. In terms of biological role, component of the acetyl coenzyme A carboxylase (ACC) complex. First, biotin carboxylase catalyzes the carboxylation of biotin on its carrier protein (BCCP) and then the CO(2) group is transferred by the carboxyltransferase to acetyl-CoA to form malonyl-CoA. This Acaryochloris marina (strain MBIC 11017) protein is Acetyl-coenzyme A carboxylase carboxyl transferase subunit alpha.